Here is a 131-residue protein sequence, read N- to C-terminus: Putative pre-16S rRNA nuclease (131 aa).

This sequence belongs to the YqgF nuclease family.

It localises to the cytoplasm. Could be a nuclease involved in processing of the 5'-end of pre-16S rRNA. The chain is Putative pre-16S rRNA nuclease from Bordetella avium (strain 197N).